The following is a 418-amino-acid chain: GTPase Obg (418 aa).

Positions 1 to 156 (MKFIDEITLN…KKLTLVLKVL (156 aa)) constitute an Obg domain. The region spanning 157–324 (ADVGFVGKPS…LKEALWQSVK (168 aa)) is the OBG-type G domain. Residues 163 to 170 (GKPSAGKS), 188 to 192 (FTTLV), 209 to 212 (DLPG), 278 to 281 (NKKD), and 305 to 307 (SAL) each bind GTP. 2 residues coordinate Mg(2+): Ser-170 and Thr-190. An OCT domain is found at 339–417 (VFINFEADFN…IYDYEFVWGN (79 aa)).

This sequence belongs to the TRAFAC class OBG-HflX-like GTPase superfamily. OBG GTPase family. As to quaternary structure, monomer. Mg(2+) is required as a cofactor.

It localises to the cytoplasm. Its function is as follows. An essential GTPase which binds GTP, GDP and possibly (p)ppGpp with moderate affinity, with high nucleotide exchange rates and a fairly low GTP hydrolysis rate. Plays a role in control of the cell cycle, stress response, ribosome biogenesis and in those bacteria that undergo differentiation, in morphogenesis control. In Mycoplasmopsis pulmonis (strain UAB CTIP) (Mycoplasma pulmonis), this protein is GTPase Obg.